The chain runs to 141 residues: Lutropin subunit beta (141 aa).

Positions Met-1–Ala-20 are cleaved as a signal peptide. Intrachain disulfides connect Cys-29–Cys-77, Cys-43–Cys-92, Cys-46–Cys-130, Cys-54–Cys-108, Cys-58–Cys-110, and Cys-113–Cys-120. A glycan (N-linked (GlcNAc...) asparagine) is linked at Asn-33.

This sequence belongs to the glycoprotein hormones subunit beta family. In terms of assembly, heterodimer of a common alpha chain and a unique beta chain which confers biological specificity to thyrotropin, lutropin, follitropin and gonadotropin.

Its subcellular location is the secreted. Promotes spermatogenesis and ovulation by stimulating the testes and ovaries to synthesize steroids. The sequence is that of Lutropin subunit beta (LHB) from Bos taurus (Bovine).